Reading from the N-terminus, the 225-residue chain is MSDILKNDWKNYLQSEFQKDYYINLRKFLINEYNSKTIYPNMYDLFNALHFTPYNKVKVVILGQDPYHGPGQAHGLSFSVNPGVKTPPSLINIYKELHTDLGCYIPNNGYLRKWADQGVLLLNTVLTVRAGEANSHKNKGWEEFTNEVIKVLNKKETPIVFILWGNNAISKTDFITNPKHLIIKSVHPSPLSASRGFFGSKPFSKTNNFLISTNQEPIDWQIENI.

D65 serves as the catalytic Proton acceptor.

The protein belongs to the uracil-DNA glycosylase (UDG) superfamily. UNG family.

The protein localises to the cytoplasm. It catalyses the reaction Hydrolyzes single-stranded DNA or mismatched double-stranded DNA and polynucleotides, releasing free uracil.. Functionally, excises uracil residues from the DNA which can arise as a result of misincorporation of dUMP residues by DNA polymerase or due to deamination of cytosine. The polypeptide is Uracil-DNA glycosylase (Clostridium beijerinckii (strain ATCC 51743 / NCIMB 8052) (Clostridium acetobutylicum)).